A 67-amino-acid chain; its full sequence is Spiniferin (67 aa).

Residues 1–23 (MKTQLAILLITLVLFQMFSQSDA) form the signal peptide. L36 bears the Leucine amide mark. The propeptide occupies 40-67 (GLNDLSDLDELFDGEISKADLDFLREIM).

Belongs to the non-disulfide-bridged peptide (NDBP) superfamily. Short antimicrobial peptide (group 4) family. As to expression, expressed by the venom gland.

Its subcellular location is the secreted. The protein resides in the target cell membrane. Its function is as follows. Alpha-helical and amphipathic peptide with weak antimicrobial activities against both Gram-positive (MIC=41 uM to &gt;82 uM) and Gram-negative (MIC&gt;82 uM) bacteria. It has extremely weak hemolytic activity against human erythrocytes. In Heterometrus spinifer (Asia giant forest scorpion), this protein is Spiniferin.